The sequence spans 460 residues: ATP synthase subunit beta (460 aa).

150–157 (GGAGVGKT) contributes to the ATP binding site.

Belongs to the ATPase alpha/beta chains family. In terms of assembly, F-type ATPases have 2 components, CF(1) - the catalytic core - and CF(0) - the membrane proton channel. CF(1) has five subunits: alpha(3), beta(3), gamma(1), delta(1), epsilon(1). CF(0) has three main subunits: a(1), b(2) and c(9-12). The alpha and beta chains form an alternating ring which encloses part of the gamma chain. CF(1) is attached to CF(0) by a central stalk formed by the gamma and epsilon chains, while a peripheral stalk is formed by the delta and b chains.

The protein resides in the cell inner membrane. The enzyme catalyses ATP + H2O + 4 H(+)(in) = ADP + phosphate + 5 H(+)(out). Functionally, produces ATP from ADP in the presence of a proton gradient across the membrane. The catalytic sites are hosted primarily by the beta subunits. This is ATP synthase subunit beta from Sodalis glossinidius (strain morsitans).